Here is a 171-residue protein sequence, read N- to C-terminus: Dual-action ribosomal maturation protein DarP (171 aa).

A disordered region spans residues 1 to 30 (MPKRPAENPEQSDDFVSKSQKKREMAERQE).

It belongs to the DarP family.

The protein resides in the cytoplasm. Functionally, member of a network of 50S ribosomal subunit biogenesis factors which assembles along the 30S-50S interface, preventing incorrect 23S rRNA structures from forming. Promotes peptidyl transferase center (PTC) maturation. This is Dual-action ribosomal maturation protein DarP from Idiomarina loihiensis (strain ATCC BAA-735 / DSM 15497 / L2-TR).